A 501-amino-acid polypeptide reads, in one-letter code: 2,3-bisphosphoglycerate-independent phosphoglycerate mutase (501 aa).

Mn(2+)-binding residues include aspartate 10 and serine 60. Serine 60 (phosphoserine intermediate) is an active-site residue. Residues histidine 121, 151–152 (RD), arginine 182, arginine 188, 256–259 (RPDR), and lysine 329 each bind substrate. 5 residues coordinate Mn(2+): aspartate 394, histidine 398, aspartate 435, histidine 436, and histidine 453.

The protein belongs to the BPG-independent phosphoglycerate mutase family. Monomer. Requires Mn(2+) as cofactor.

It carries out the reaction (2R)-2-phosphoglycerate = (2R)-3-phosphoglycerate. It participates in carbohydrate degradation; glycolysis; pyruvate from D-glyceraldehyde 3-phosphate: step 3/5. Its function is as follows. Catalyzes the interconversion of 2-phosphoglycerate and 3-phosphoglycerate. This is 2,3-bisphosphoglycerate-independent phosphoglycerate mutase from Mycoplasmopsis synoviae (strain 53) (Mycoplasma synoviae).